A 556-amino-acid chain; its full sequence is 2-succinyl-5-enolpyruvyl-6-hydroxy-3-cyclohexene-1-carboxylate synthase (556 aa).

The protein belongs to the TPP enzyme family. MenD subfamily. In terms of assembly, homodimer. Mg(2+) is required as a cofactor. Requires Mn(2+) as cofactor. It depends on thiamine diphosphate as a cofactor.

It catalyses the reaction isochorismate + 2-oxoglutarate + H(+) = 5-enolpyruvoyl-6-hydroxy-2-succinyl-cyclohex-3-ene-1-carboxylate + CO2. It participates in quinol/quinone metabolism; 1,4-dihydroxy-2-naphthoate biosynthesis; 1,4-dihydroxy-2-naphthoate from chorismate: step 2/7. The protein operates within quinol/quinone metabolism; menaquinone biosynthesis. Catalyzes the thiamine diphosphate-dependent decarboxylation of 2-oxoglutarate and the subsequent addition of the resulting succinic semialdehyde-thiamine pyrophosphate anion to isochorismate to yield 2-succinyl-5-enolpyruvyl-6-hydroxy-3-cyclohexene-1-carboxylate (SEPHCHC). This chain is 2-succinyl-5-enolpyruvyl-6-hydroxy-3-cyclohexene-1-carboxylate synthase, found in Escherichia coli O45:K1 (strain S88 / ExPEC).